The sequence spans 186 residues: ATP synthase subunit delta (186 aa).

Belongs to the ATPase delta chain family. As to quaternary structure, F-type ATPases have 2 components, F(1) - the catalytic core - and F(0) - the membrane proton channel. F(1) has five subunits: alpha(3), beta(3), gamma(1), delta(1), epsilon(1). F(0) has three main subunits: a(1), b(2) and c(10-14). The alpha and beta chains form an alternating ring which encloses part of the gamma chain. F(1) is attached to F(0) by a central stalk formed by the gamma and epsilon chains, while a peripheral stalk is formed by the delta and b chains.

Its subcellular location is the cell inner membrane. In terms of biological role, f(1)F(0) ATP synthase produces ATP from ADP in the presence of a proton or sodium gradient. F-type ATPases consist of two structural domains, F(1) containing the extramembraneous catalytic core and F(0) containing the membrane proton channel, linked together by a central stalk and a peripheral stalk. During catalysis, ATP synthesis in the catalytic domain of F(1) is coupled via a rotary mechanism of the central stalk subunits to proton translocation. This protein is part of the stalk that links CF(0) to CF(1). It either transmits conformational changes from CF(0) to CF(1) or is implicated in proton conduction. This Ruegeria sp. (strain TM1040) (Silicibacter sp.) protein is ATP synthase subunit delta.